The following is a 946-amino-acid chain: Bifunctional glutamine synthetase adenylyltransferase/adenylyl-removing enzyme (946 aa).

Positions 1-440 are adenylyl removase; the sequence is MKPLSSPLQQ…VFNELIGDDE (440 aa). The tract at residues 449 to 946 is adenylyl transferase; sequence SEQWRELWQD…ASWQKWLVEE (498 aa).

Belongs to the GlnE family. Mg(2+) is required as a cofactor.

The enzyme catalyses [glutamine synthetase]-O(4)-(5'-adenylyl)-L-tyrosine + phosphate = [glutamine synthetase]-L-tyrosine + ADP. It carries out the reaction [glutamine synthetase]-L-tyrosine + ATP = [glutamine synthetase]-O(4)-(5'-adenylyl)-L-tyrosine + diphosphate. Functionally, involved in the regulation of glutamine synthetase GlnA, a key enzyme in the process to assimilate ammonia. When cellular nitrogen levels are high, the C-terminal adenylyl transferase (AT) inactivates GlnA by covalent transfer of an adenylyl group from ATP to specific tyrosine residue of GlnA, thus reducing its activity. Conversely, when nitrogen levels are low, the N-terminal adenylyl removase (AR) activates GlnA by removing the adenylyl group by phosphorolysis, increasing its activity. The regulatory region of GlnE binds the signal transduction protein PII (GlnB) which indicates the nitrogen status of the cell. This chain is Bifunctional glutamine synthetase adenylyltransferase/adenylyl-removing enzyme, found in Escherichia coli O8 (strain IAI1).